A 171-amino-acid polypeptide reads, in one-letter code: KRAB domain-containing protein 4 (171 aa).

A KRAB domain is found at 8 to 79; it reads LTFKDVFVDF…DGGTPVRTCA (72 aa).

Expressed in brain, ovary, testis, prostate, tonsil, heart, bone marrow, colon, breast and kidney.

The sequence is that of KRAB domain-containing protein 4 (KRBOX4) from Homo sapiens (Human).